The sequence spans 237 residues: Endoglucanase-1 (237 aa).

The signal sequence occupies residues 1 to 16 (MKAFHLLAALAGAAVA). The residue at position 17 (Gln17) is a Pyrrolidone carboxylic acid.

Belongs to the glycosyl hydrolase 12 (cellulase H) family.

It is found in the secreted. It carries out the reaction Endohydrolysis of (1-&gt;4)-beta-D-glucosidic linkages in cellulose, lichenin and cereal beta-D-glucans.. The chain is Endoglucanase-1 from Aspergillus aculeatus.